The sequence spans 361 residues: Plasmid recombination enzyme (361 aa).

Tyr-44 and Tyr-114 together coordinate DNA. A disordered region spans residues 331 to 361 (RAGLKEPSKKAPESSQELDRHKSDELGGPHL).

Belongs to the plasmid mobilization pre family.

In terms of biological role, the interaction of the RSA site and the pre protein may not only serve a function in plasmid maintenance, but also contribute to the distribution of small antibiotic resistance plasmids among Gram-positive bacteria. In Lactiplantibacillus plantarum (Lactobacillus plantarum), this protein is Plasmid recombination enzyme (preA).